Here is a 959-residue protein sequence, read N- to C-terminus: DNA-directed RNA polymerase subunit beta'' (959 aa).

4 residues coordinate Zn(2+): cysteine 211, cysteine 288, cysteine 295, and cysteine 298.

It belongs to the RNA polymerase beta' chain family. RpoC2 subfamily. As to quaternary structure, in plastids the minimal PEP RNA polymerase catalytic core is composed of four subunits: alpha, beta, beta', and beta''. When a (nuclear-encoded) sigma factor is associated with the core the holoenzyme is formed, which can initiate transcription. The cofactor is Zn(2+).

The protein resides in the plastid. It localises to the apicoplast. It catalyses the reaction RNA(n) + a ribonucleoside 5'-triphosphate = RNA(n+1) + diphosphate. Functionally, DNA-dependent RNA polymerase catalyzes the transcription of DNA into RNA using the four ribonucleoside triphosphates as substrates. The sequence is that of DNA-directed RNA polymerase subunit beta'' from Plasmodium falciparum (isolate 3D7).